Here is a 363-residue protein sequence, read N- to C-terminus: DNA replication and repair protein RecF (363 aa).

Residue 30-37 (GNNAQGKT) coordinates ATP.

It belongs to the RecF family.

It is found in the cytoplasm. The RecF protein is involved in DNA metabolism; it is required for DNA replication and normal SOS inducibility. RecF binds preferentially to single-stranded, linear DNA. It also seems to bind ATP. This Clostridium acetobutylicum (strain ATCC 824 / DSM 792 / JCM 1419 / IAM 19013 / LMG 5710 / NBRC 13948 / NRRL B-527 / VKM B-1787 / 2291 / W) protein is DNA replication and repair protein RecF.